We begin with the raw amino-acid sequence, 402 residues long: S-adenosylmethionine synthase (402 aa).

His-16 contacts ATP. Mg(2+) is bound at residue Asp-18. Glu-44 contributes to the K(+) binding site. Glu-57 and Gln-109 together coordinate L-methionine. Residues 109-119 (QSAHIAQGVDA) are flexible loop. ATP is bound by residues 174–176 (DTK), Asp-252, 258–259 (RK), Ala-275, and Lys-279. Asp-252 contributes to the L-methionine binding site. Residue Lys-283 coordinates L-methionine.

The protein belongs to the AdoMet synthase family. In terms of assembly, homotetramer; dimer of dimers. Mg(2+) is required as a cofactor. K(+) serves as cofactor.

It localises to the cytoplasm. It catalyses the reaction L-methionine + ATP + H2O = S-adenosyl-L-methionine + phosphate + diphosphate. It participates in amino-acid biosynthesis; S-adenosyl-L-methionine biosynthesis; S-adenosyl-L-methionine from L-methionine: step 1/1. Its function is as follows. Catalyzes the formation of S-adenosylmethionine (AdoMet) from methionine and ATP. The overall synthetic reaction is composed of two sequential steps, AdoMet formation and the subsequent tripolyphosphate hydrolysis which occurs prior to release of AdoMet from the enzyme. This chain is S-adenosylmethionine synthase, found in Rhizorhabdus wittichii (strain DSM 6014 / CCUG 31198 / JCM 15750 / NBRC 105917 / EY 4224 / RW1) (Sphingomonas wittichii).